A 142-amino-acid chain; its full sequence is uncharacterized protein (142 aa).

2 helical membrane passes run 75–97 and 107–124; these read VFFR…YIVA and LSIV…KLFY.

The protein localises to the cell membrane. This is an uncharacterized protein from Archaeoglobus fulgidus (strain ATCC 49558 / DSM 4304 / JCM 9628 / NBRC 100126 / VC-16).